The primary structure comprises 1122 residues: Telomerase reverse transcriptase (1122 aa).

An RNA-interacting domain 1 region spans residues M1 to T239. The tract at residues M58–L205 is GQ motif. The tract at residues W137–L141 is required for regulating specificity for telomeric DNA and for processivity for primer elongation. Positions S213–S296 are disordered. Residues S240–P328 form a linker region. The span at T284–V295 shows a compositional bias: basic and acidic residues. Positions C306–E528 are required for oligomerization. Residues F329–D540 form an RNA-interacting domain 2 region. Positions T332 to Y337 match the TFLY; involved in RNA binding motif. The interval L381 to R511 is QFP motif. A CP motif region spans residues L402 to T422. S447 bears the Phosphoserine; by DYRK2 mark. Residues E595–L928 enclose the Reverse transcriptase domain. Phosphotyrosine; by SRC-type Tyr-kinases is present on Y697. Residues D702, D861, and D862 each coordinate Mg(2+). The interval L907–F921 is required for oligomerization. A primer grip sequence region spans residues W923–L927. The CTE stretch occupies residues D929 to D1122.

It belongs to the reverse transcriptase family. Telomerase subfamily. Catalytic component of the telomerase holoenzyme complex composed of one molecule of TERT, one molecule of WRAP53/TCAB1, two molecules of H/ACA ribonucleoprotein complex subunits DKC1, NOP10, NHP2 and GAR1, and a telomerase RNA template component (TERC). The telomerase holoenzyme complex is associated with TEP1, SMG6/EST1A and POT1. The molecular chaperone HSP90/P23 complex is required for correct assembly and stabilization of the active telomerase. Interacts directly with HSP90A and PTGES3. Interacts with HSPA1A; the interaction occurs in the absence of TERC and dissociates once the complex has formed. Interacts with RAN; the interaction promotes nuclear export of TERT. Interacts with XPO1. Interacts with PTPN11; the interaction retains TERT in the nucleus. Interacts with NCL (via RRM1 and C-terminal RRM4/Arg/Gly-rich domains); the interaction is important for nucleolar localization of TERT. Interacts with SMARCA4 (via the bromodomain); the interaction regulates Wnt-mediated signaling. Interacts with MCRS1 (isoform MCRS2); the interaction inhibits in vitro telomerase activity. Interacts with PIF1; the interaction has no effect on the elongation activity of TERT. Interacts with PML; the interaction recruits TERT to PML bodies and inhibits telomerase activity. Interacts with GNL3L. Interacts with isoform 1 and isoform 2 of NVL. Interacts with DHX36. Interacts with ATF7. Phosphorylation at Tyr-697 under oxidative stress leads to translocation of TERT to the cytoplasm and reduces its antiapoptotic activity. Dephosphorylated by SHP2/PTPN11 leading to nuclear retention. Phosphorylation by the AKT pathway promotes nuclear location. Phosphorylation at the G2/M phase at Ser-447 by DYRK2 promotes ubiquitination by the EDVP complex and degradation. In terms of processing, ubiquitinated by the EDVP complex, a E3 ligase complex following phosphorylation at Ser-447 by DYRK2. Ubiquitinated leads to proteasomal degradation. As to expression, high activity in intestine, liver and testis, moderate in lung, very low in muscle, heart and brain.

Its subcellular location is the nucleus. It localises to the nucleolus. The protein localises to the nucleoplasm. It is found in the chromosome. The protein resides in the telomere. Its subcellular location is the cytoplasm. It localises to the PML body. The catalysed reaction is DNA(n) + a 2'-deoxyribonucleoside 5'-triphosphate = DNA(n+1) + diphosphate. Functionally, telomerase is a ribonucleoprotein enzyme essential for the replication of chromosome termini in most eukaryotes. Active in progenitor and cancer cells. Inactive, or very low activity, in normal somatic cells. Catalytic component of the teleromerase holoenzyme complex whose main activity is the elongation of telomeres by acting as a reverse transcriptase that adds simple sequence repeats to chromosome ends by copying a template sequence within the RNA component of the enzyme. Catalyzes the RNA-dependent extension of 3'-chromosomal termini with the 6-nucleotide telomeric repeat unit, 5'-TTAGGG-3'. The catalytic cycle involves primer binding, primer extension and release of product once the template boundary has been reached or nascent product translocation followed by further extension. More active on substrates containing 2 or 3 telomeric repeats. Telomerase activity is regulated by a number of factors including telomerase complex-associated proteins, chaperones and polypeptide modifiers. Modulates Wnt signaling. Plays important roles in aging and antiapoptosis. This Mus musculus (Mouse) protein is Telomerase reverse transcriptase (Tert).